The following is a 768-amino-acid chain: Actin filament-associated protein 1-like 1 (768 aa).

A disordered region spans residues 82–145; sequence DLRDMPEDDG…GKSPEYISSH (64 aa). A phosphoserine mark is found at S94, S98, S104, and S153. The tract at residues 173 to 211 is disordered; the sequence is GELKSSYNDSDAMSSSYESYDEEEEEGKSPQPRHQWPSE. Over residues 177–190 the composition is skewed to low complexity; sequence SSYNDSDAMSSSYE. In terms of domain architecture, PH 1 spans 220–316; the sequence is ECRICAFLLR…WLKVIREVSK (97 aa). Phosphoserine occurs at positions 329 and 343. One can recognise a PH 2 domain in the interval 418–512; it reads EVPCCGYLNV…WLGLLLVEMG (95 aa). Y557 is subject to Phosphotyrosine. Residues 566-604 form a disordered region; it reads QDEEPERPTGAQVKRHASSCSEKSHRVDPQVKVKRHASS. The segment covering 587–596 has biased composition (basic and acidic residues); the sequence is EKSHRVDPQV. A coiled-coil region spans residues 611–700; sequence GKNRAEEDAR…VAVKERLQQS (90 aa). Residues 705–768 are disordered; that stretch reads PALGLSVSSK…KAKEWEMKKT (64 aa). Over residues 710–729 the composition is skewed to polar residues; it reads SVSSKPKSGETANKPQNSVP. S747 is subject to Phosphoserine. Over residues 759–768 the composition is skewed to basic and acidic residues; sequence KAKEWEMKKT.

As to quaternary structure, interacts with CTTN. Expressed in breast, colon and brain. In all 3 tissues, expressed in the microvasculature (at protein level). In addition, in the breast, found in the contractile myoepithelial cell layer which surrounds the breast ducts (at protein level). In the colon, expressed in the mucous membrane and colonic crypts and in the smooth muscle cell layer which provide movement of the colon (at protein level). In the cerebellum, localized around the Purkinje neurons and the granule cells of the granular layer, but not inside cell bodies (at protein level). Outside of the cerebellar cortex, expressed in glial cells (at protein level). Highly expressed away from the cell bodies within the dentate nucleus (at protein level).

Its subcellular location is the cytoplasm. The protein resides in the cell projection. It is found in the podosome. It localises to the invadopodium. The protein localises to the cytoskeleton. Its subcellular location is the stress fiber. Its function is as follows. May be involved in podosome and invadosome formation. The protein is Actin filament-associated protein 1-like 1 (AFAP1L1) of Homo sapiens (Human).